The chain runs to 409 residues: NADH-ubiquinone oxidoreductase chain 4 (409 aa).

13 consecutive transmembrane segments (helical) span residues 10 to 30 (LWLF…FLIF), 44 to 64 (SYSF…IVIS), 76 to 96 (ILVF…LYMF), 98 to 118 (ELSM…IEKI), 120 to 140 (SSYY…FVYF), 160 to 180 (FFIL…HLWL), 194 to 214 (LLAG…LGSL), 221 to 241 (VWIL…VFQS), 245 to 265 (ALAA…LVFI), 271 to 291 (ISSV…FYLI), 305 to 325 (FMSS…VVFL), 353 to 373 (MFVM…FLIT), and 389 to 409 (VGFS…SVFY).

This sequence belongs to the complex I subunit 4 family.

Its subcellular location is the mitochondrion membrane. It carries out the reaction a ubiquinone + NADH + 5 H(+)(in) = a ubiquinol + NAD(+) + 4 H(+)(out). In terms of biological role, core subunit of the mitochondrial membrane respiratory chain NADH dehydrogenase (Complex I) that is believed to belong to the minimal assembly required for catalysis. Complex I functions in the transfer of electrons from NADH to the respiratory chain. The immediate electron acceptor for the enzyme is believed to be ubiquinone. This Caenorhabditis elegans protein is NADH-ubiquinone oxidoreductase chain 4.